The primary structure comprises 900 residues: Bifunctional uridylyltransferase/uridylyl-removing enzyme (900 aa).

A uridylyltransferase region spans residues 1–342 (MPQVDPELFD…WEGESGPIVP (342 aa)). The tract at residues 343–705 (LNSRFQVRDG…TTQREFEGGT (363 aa)) is uridylyl-removing. Residues 461–583 (VDAHTLNVIK…VGDETHLDYL (123 aa)) enclose the HD domain. ACT domains are found at residues 706-789 (QIFI…IIQR) and 816-896 (ILEI…PSPS).

This sequence belongs to the GlnD family. The cofactor is Mg(2+).

The enzyme catalyses [protein-PII]-L-tyrosine + UTP = [protein-PII]-uridylyl-L-tyrosine + diphosphate. It carries out the reaction [protein-PII]-uridylyl-L-tyrosine + H2O = [protein-PII]-L-tyrosine + UMP + H(+). Its activity is regulated as follows. Uridylyltransferase (UTase) activity is inhibited by glutamine, while glutamine activates uridylyl-removing (UR) activity. Modifies, by uridylylation and deuridylylation, the PII regulatory proteins (GlnB and homologs), in response to the nitrogen status of the cell that GlnD senses through the glutamine level. Under low glutamine levels, catalyzes the conversion of the PII proteins and UTP to PII-UMP and PPi, while under higher glutamine levels, GlnD hydrolyzes PII-UMP to PII and UMP (deuridylylation). Thus, controls uridylylation state and activity of the PII proteins, and plays an important role in the regulation of nitrogen fixation and metabolism. This Stutzerimonas stutzeri (strain A1501) (Pseudomonas stutzeri) protein is Bifunctional uridylyltransferase/uridylyl-removing enzyme.